The following is a 204-amino-acid chain: Inactive ribonuclease-like protein 9 (204 aa).

Residues 1 to 26 (MMRTLITIHPLPLLLLLQQLLQPVQF) form the signal peptide. 3 disulfides stabilise this stretch: cysteine 97–cysteine 152, cysteine 115–cysteine 167, and cysteine 122–cysteine 129. Asparagine 130 and asparagine 142 each carry an N-linked (GlcNAc...) asparagine glycan.

The protein belongs to the pancreatic ribonuclease family.

Its subcellular location is the secreted. Does not exhibit any ribonuclease activity. The sequence is that of Inactive ribonuclease-like protein 9 (RNASE9) from Pongo pygmaeus (Bornean orangutan).